The following is a 257-amino-acid chain: S-methyl-5'-thioadenosine phosphorylase (257 aa).

Phosphate-binding positions include Ser10 and Arg50–His51. Met180 lines the substrate pocket. Thr181 contributes to the phosphate binding site. Asp204–Asp206 contacts substrate.

Belongs to the PNP/MTAP phosphorylase family. MTAP subfamily. In terms of assembly, homohexamer. Dimer of a homotrimer.

The catalysed reaction is S-methyl-5'-thioadenosine + phosphate = 5-(methylsulfanyl)-alpha-D-ribose 1-phosphate + adenine. It functions in the pathway amino-acid biosynthesis; L-methionine biosynthesis via salvage pathway; S-methyl-5-thio-alpha-D-ribose 1-phosphate from S-methyl-5'-thioadenosine (phosphorylase route): step 1/1. Catalyzes the reversible phosphorylation of S-methyl-5'-thioadenosine (MTA) to adenine and 5-methylthioribose-1-phosphate. Involved in the breakdown of MTA, a major by-product of polyamine biosynthesis. Responsible for the first step in the methionine salvage pathway after MTA has been generated from S-adenosylmethionine. Has broad substrate specificity with 6-aminopurine nucleosides as preferred substrates. This is S-methyl-5'-thioadenosine phosphorylase from Pyrococcus horikoshii (strain ATCC 700860 / DSM 12428 / JCM 9974 / NBRC 100139 / OT-3).